We begin with the raw amino-acid sequence, 108 residues long: UPF0060 membrane protein YnfA (108 aa).

Residues 1 to 5 are Periplasmic-facing; the sequence is MLKTT. The chain crosses the membrane as a helical span at residues 6–26; sequence LLFFVTALCEIIGCFLPWLWL. The Cytoplasmic portion of the chain corresponds to 27-30; sequence KRGA. Residues 31–51 traverse the membrane as a helical segment; it reads SMWWLLPAAASLALFVWLLTL. The Periplasmic portion of the chain corresponds to 52 to 60; the sequence is HPAASGRVY. A helical transmembrane segment spans residues 61 to 81; it reads AAYGGVYVCTALLWLRVVDGV. The Cytoplasmic portion of the chain corresponds to 82–84; that stretch reads RLT. A helical transmembrane segment spans residues 85 to 105; that stretch reads VYDWCGALIALCGMLIIVVGW. Residues 106–108 lie on the Periplasmic side of the membrane; sequence GRT.

The protein belongs to the UPF0060 family.

It localises to the cell inner membrane. This Salmonella schwarzengrund (strain CVM19633) protein is UPF0060 membrane protein YnfA.